The chain runs to 434 residues: UDP-N-acetylglucosamine 1-carboxyvinyltransferase (434 aa).

34–35 (KN) provides a ligand contact to phosphoenolpyruvate. Residue Arg-104 coordinates UDP-N-acetyl-alpha-D-glucosamine. The active-site Proton donor is Cys-128. Cys-128 is subject to 2-(S-cysteinyl)pyruvic acid O-phosphothioketal. Residues Asp-319 and Ile-341 each contribute to the UDP-N-acetyl-alpha-D-glucosamine site.

It belongs to the EPSP synthase family. MurA subfamily.

It localises to the cytoplasm. The catalysed reaction is phosphoenolpyruvate + UDP-N-acetyl-alpha-D-glucosamine = UDP-N-acetyl-3-O-(1-carboxyvinyl)-alpha-D-glucosamine + phosphate. It participates in cell wall biogenesis; peptidoglycan biosynthesis. Functionally, cell wall formation. Adds enolpyruvyl to UDP-N-acetylglucosamine. The protein is UDP-N-acetylglucosamine 1-carboxyvinyltransferase of Prochlorococcus marinus (strain MIT 9313).